The primary structure comprises 160 residues: FMRFamide-like neuropeptides 13 (160 aa).

A signal peptide spans 1 to 17 (MMTSLLTISMFVVAIQA). A propeptide spanning residues 18 to 43 (FDSSEIRMLDEQYDTKNPFFQFLENS) is cleaved from the precursor. Phenylalanine 60, phenylalanine 73, phenylalanine 85, phenylalanine 98, phenylalanine 110, phenylalanine 123, phenylalanine 135, phenylalanine 146, and phenylalanine 157 each carry phenylalanine amide.

The protein belongs to the FARP (FMRFamide related peptide) family. In terms of tissue distribution, expressed in the ASE sensory neurons, the DD motor neurons, the 15, M3 and M5 cholinergic pharyngeal motoneurons, and the ASG, ASK and BAG neurons.

It is found in the secreted. In terms of biological role, probable FMRFamide-like neuropeptides. Binds to neuronal receptors such as dmsr-1 to promote sleep in response to cellular stress also known as stress-induced sleep (SIS). Plays a role in behaviors associated with SIS, acting in concert with the FMRFamide related peptide, flp-24 and neuropeptide-like protein nlp-8. Functionally, AADGAPLIRF-amide: Inhibits muscle tension in somatic muscle. Acts as a ligand for the npr-22 receptor in vitro. Acts as a ligand for isoform a of the dmsr-1 G-protein coupled receptor in vitro. Its function is as follows. APEASPFIRF-amide: Inhibits muscle tension in somatic muscle. Potent inhibitor of the activity of the dissected pharyngeal myogenic muscle system. Acts as a ligand for isoform a of the dmsr-1 G-protein coupled receptor in vitro. Acts as a ligand for the npr-22 receptor in vitro. Acts as a ligand for isoform a of the dmsr-1 G-protein coupled receptor in vitro. In terms of biological role, acts as a ligand for isoform a of the dmsr-1 G-protein coupled receptor in vitro. This is FMRFamide-like neuropeptides 13 from Caenorhabditis elegans.